The following is a 370-amino-acid chain: Protein phosphatase 2C homolog 2 (370 aa).

The PPM-type phosphatase domain maps to 23–291 (HFGVSHMQGW…DNMTICIVAF (269 aa)). Mn(2+)-binding residues include D63, G64, D233, and D282. Phosphoserine occurs at positions 355 and 357.

The protein belongs to the PP2C family. Monomer. Mg(2+) is required as a cofactor. Mn(2+) serves as cofactor.

The protein localises to the nucleus. It is found in the cytoplasm. It localises to the cytosol. It catalyses the reaction O-phospho-L-seryl-[protein] + H2O = L-seryl-[protein] + phosphate. It carries out the reaction O-phospho-L-threonyl-[protein] + H2O = L-threonyl-[protein] + phosphate. With respect to regulation, activity is reduced when phosphosrylated at Ser-355/Ser-357. Dephosphorylating regulator for many key proteins. Has an important role in osmotic stability and cell shape control. It may negatively regulate the osmosensing signal transmitted through wis1 map kinase. The protein is Protein phosphatase 2C homolog 2 (ptc2) of Schizosaccharomyces pombe (strain 972 / ATCC 24843) (Fission yeast).